The chain runs to 834 residues: RNA-binding protein 12B-B (834 aa).

One can recognise an RRM 1 domain in the interval 154-229 (PYLFLRGLPY…RFIEVMQGSE (76 aa)). A disordered region spans residues 237-277 (GTATEGGDTPRMRSEEHSPSRRINGRHFRKRSHSKSPRARS). Basic and acidic residues predominate over residues 244 to 255 (DTPRMRSEEHSP). Residues 259–277 (INGRHFRKRSHSKSPRARS) show a composition bias toward basic residues. RRM domains lie at 283–359 (FYVH…PVSR) and 401–478 (LCIY…LISE). 2 disordered regions span residues 546 to 572 (GYFRQSDRCSPEDFRHSPEDYRHPWEE) and 621 to 643 (HFRRSYQEHIRRPPQEHFRRSRE). Residues 550 to 572 (QSDRCSPEDFRHSPEDYRHPWEE) show a composition bias toward basic and acidic residues. Ser701 is modified (phosphoserine). Residues 758–834 (IRVMISNLPF…GPRKVKLSLL (77 aa)) enclose the RRM 4 domain.

The protein is RNA-binding protein 12B-B (Rbm12b2) of Mus musculus (Mouse).